The chain runs to 373 residues: P2Y purinoceptor 1 (373 aa).

At 1 to 51 (MTEVPWSVVPNGTDAAFLAGLGSLWGNSTVASTAAVSSSFQCALTKTGFQF) the chain is on the extracellular side. Residues asparagine 11 and asparagine 27 are each glycosylated (N-linked (GlcNAc...) asparagine). Disulfide bonds link cysteine 42–cysteine 296 and cysteine 124–cysteine 202. ADP is bound at residue lysine 46. A helical membrane pass occupies residues 52–74 (YYLPAVYILVFIIGFLGNSVAIW). The Cytoplasmic segment spans residues 75–87 (MFVFHMKPWSGIS). Residues 88–109 (VYMFNLALADFLYVLTLPALIF) form a helical membrane-spanning segment. Over 110–125 (YYFNKTDWIFGDAMCK) the chain is Extracellular. N-linked (GlcNAc...) asparagine glycosylation is present at asparagine 113. Residues 126–147 (LQRFIFHVNLYGSILFLTCISA) traverse the membrane as a helical segment. The Cytoplasmic segment spans residues 148-166 (HRYSGVVYPLKSLGRLKKK). Residues 167–188 (NAIYVSVLVWLIVVVAISPILF) traverse the membrane as a helical segment. Residues 189–214 (YSGTGTRKNKTVTCYDTTSNDYLRSY) lie on the Extracellular side of the membrane. Asparagine 197 carries N-linked (GlcNAc...) asparagine glycosylation. 203–205 (YDT) is an ADP binding site. A helical transmembrane segment spans residues 215-237 (FIYSMCTTVAMFCIPLVLILGCY). The Cytoplasmic segment spans residues 238–260 (GLIVKALIYNDLDNSPLRRKSIY). The chain crosses the membrane as a helical span at residues 261 to 284 (LVIIVLTVFAVSYIPFHVMKTMNL). ADP-binding positions include 283–287 (NLRAR), 303–306 (YATY), and arginine 310. Residues 285-303 (RARLDFQTPEMCDFNDRVY) are Extracellular-facing. A helical transmembrane segment spans residues 304–325 (ATYQVTRGLASLNSCVDPILYF). The Cytoplasmic segment spans residues 326–373 (LAGDTFRRRLSRATRKASRRSEANLQSKSEEMTLNILSEFKQNGDTSL).

Belongs to the G-protein coupled receptor 1 family.

It localises to the cell membrane. Its function is as follows. Receptor for extracellular adenine nucleotides such as ADP. In platelets, binding to ADP leads to mobilization of intracellular calcium ions via activation of phospholipase C, a change in platelet shape, and ultimately platelet aggregation. This Mus musculus (Mouse) protein is P2Y purinoceptor 1 (P2ry1).